We begin with the raw amino-acid sequence, 247 residues long: V-type proton ATPase subunit D (247 aa).

It belongs to the V-ATPase D subunit family. As to quaternary structure, V-ATPase is a heteromultimeric enzyme made up of two complexes: the ATP-hydrolytic V1 complex and the proton translocation V0 complex. The V1 complex consists of three catalytic AB heterodimers that form a heterohexamer, three peripheral stalks each consisting of EG heterodimers, one central rotor including subunits D and F, and the regulatory subunits C and H. The proton translocation complex V0 consists of the proton transport subunit a, a ring of proteolipid subunits c9c'', rotary subunit d, subunits e and f, and the accessory subunits ATP6AP1/Ac45 and ATP6AP2/PRR. Interacts with SNX10. In terms of tissue distribution, expressed in brain (at protein level). Present in tissues active in secretion. Amounts elevated in brain, kidney and testis.

Its subcellular location is the membrane. It localises to the cytoplasmic vesicle. It is found in the clathrin-coated vesicle membrane. The protein resides in the cytoplasm. The protein localises to the cytoskeleton. Its subcellular location is the microtubule organizing center. It localises to the centrosome. It is found in the cell projection. The protein resides in the cilium. In terms of biological role, subunit of the V1 complex of vacuolar(H+)-ATPase (V-ATPase), a multisubunit enzyme composed of a peripheral complex (V1) that hydrolyzes ATP and a membrane integral complex (V0) that translocates protons. V-ATPase is responsible for acidifying and maintaining the pH of intracellular compartments and in some cell types, is targeted to the plasma membrane, where it is responsible for acidifying the extracellular environment. May play a role in cilium biogenesis through regulation of the transport and the localization of proteins to the cilium. This Bos taurus (Bovine) protein is V-type proton ATPase subunit D (ATP6V1D).